A 463-amino-acid polypeptide reads, in one-letter code: Exodeoxyribonuclease 7 large subunit (463 aa).

This sequence belongs to the XseA family. Heterooligomer composed of large and small subunits.

The protein resides in the cytoplasm. The enzyme catalyses Exonucleolytic cleavage in either 5'- to 3'- or 3'- to 5'-direction to yield nucleoside 5'-phosphates.. Its function is as follows. Bidirectionally degrades single-stranded DNA into large acid-insoluble oligonucleotides, which are then degraded further into small acid-soluble oligonucleotides. The chain is Exodeoxyribonuclease 7 large subunit from Pseudomonas syringae pv. syringae (strain B728a).